The sequence spans 335 residues: Ornithine carbamoyltransferase (335 aa).

Residues 57–60 (STRT), R108, and 135–138 (HPTQ) each bind carbamoyl phosphate. Residues N168, D232, and 236–237 (SM) each bind L-ornithine. Residues 274–275 (CL) and R319 contribute to the carbamoyl phosphate site.

This sequence belongs to the aspartate/ornithine carbamoyltransferase superfamily. OTCase family.

Its subcellular location is the cytoplasm. It carries out the reaction carbamoyl phosphate + L-ornithine = L-citrulline + phosphate + H(+). Its pathway is amino-acid degradation; L-arginine degradation via ADI pathway; carbamoyl phosphate from L-arginine: step 2/2. Functionally, reversibly catalyzes the transfer of the carbamoyl group from carbamoyl phosphate (CP) to the N(epsilon) atom of ornithine (ORN) to produce L-citrulline. This chain is Ornithine carbamoyltransferase, found in Limosilactobacillus reuteri (strain DSM 20016) (Lactobacillus reuteri).